A 134-amino-acid polypeptide reads, in one-letter code: UPF0102 protein Dvul_2148 (134 aa).

The protein belongs to the UPF0102 family.

The chain is UPF0102 protein Dvul_2148 from Nitratidesulfovibrio vulgaris (strain DP4) (Desulfovibrio vulgaris).